The primary structure comprises 323 residues: Fatty acid desaturase 4, chloroplastic (323 aa).

Residues 1-77 (MAVSLPTKYP…PRPNREKLVV (77 aa)) constitute a chloroplast transit peptide. 2 helical membrane-spanning segments follow: residues 101–121 (WVAA…IGGF) and 131–151 (LAGY…HWAI). The Histidine box-1 motif lies at 170-173 (QGHH). Residues 204 to 224 (LAFNDPVFHGFVCTFAFCILF) traverse the membrane as a helical segment. The Histidine box-2 motif lies at 229-233 (HAWAH). The Histidine box-3 motif lies at 258-262 (HAEHH).

Belongs to the fatty acid desaturase CarF family. The cofactor is Fe(2+).

Its subcellular location is the plastid. It is found in the chloroplast membrane. The catalysed reaction is a 1-acyl-2-hexadecanoyl-glycerolipid + 2 reduced [2Fe-2S]-[ferredoxin] + O2 + 2 H(+) = a 1-acyl-2-[(3E)-hexadec-3-enoyl]-glycerolipid + 2 oxidized [2Fe-2S]-[ferredoxin] + 2 H2O. The protein operates within lipid metabolism; fatty acid metabolism. Functionally, fatty acid desaturase involved in the production of chloroplast-specific phosphatidylglycerol molecular species containing 16:1(3E). Catalyzes the formation of a trans double bond introduced close to the carboxyl group of palmitic acid, which is specifically esterified to the sn-2 glyceryl carbon of phosphatidylglycerol. This chain is Fatty acid desaturase 4, chloroplastic, found in Arabidopsis thaliana (Mouse-ear cress).